The sequence spans 485 residues: Bifunctional protein GlmU (485 aa).

Positions 1-241 are pyrophosphorylase; the sequence is MSASDFSSAV…ARELAGVNDR (241 aa). UDP-N-acetyl-alpha-D-glucosamine-binding positions include 13–16, lysine 27, glutamine 84, and 89–90; these read LAAG and GT. Residue aspartate 114 coordinates Mg(2+). UDP-N-acetyl-alpha-D-glucosamine contacts are provided by glycine 151, glutamate 166, asparagine 181, and asparagine 239. Asparagine 239 provides a ligand contact to Mg(2+). Residues 242-262 are linker; that stretch reads VQLAEAGAELNRRTVIAAMRG. The interval 263–485 is N-acetyltransferase; that stretch reads GATIVDPATT…AAQNVHNQEG (223 aa). Arginine 344 and lysine 362 together coordinate UDP-N-acetyl-alpha-D-glucosamine. Residue histidine 374 is the Proton acceptor of the active site. UDP-N-acetyl-alpha-D-glucosamine is bound by residues tyrosine 377 and asparagine 388. Acetyl-CoA-binding positions include alanine 391, 397–398, serine 416, and alanine 434; that span reads NY. The segment at 465–485 is disordered; the sequence is RPGTAAAQAAEAAQNVHNQEG. Residues 469-478 are compositionally biased toward low complexity; that stretch reads AAAQAAEAAQ.

It in the N-terminal section; belongs to the N-acetylglucosamine-1-phosphate uridyltransferase family. This sequence in the C-terminal section; belongs to the transferase hexapeptide repeat family. Homotrimer. Mg(2+) serves as cofactor.

It is found in the cytoplasm. The catalysed reaction is alpha-D-glucosamine 1-phosphate + acetyl-CoA = N-acetyl-alpha-D-glucosamine 1-phosphate + CoA + H(+). It catalyses the reaction N-acetyl-alpha-D-glucosamine 1-phosphate + UTP + H(+) = UDP-N-acetyl-alpha-D-glucosamine + diphosphate. Its pathway is nucleotide-sugar biosynthesis; UDP-N-acetyl-alpha-D-glucosamine biosynthesis; N-acetyl-alpha-D-glucosamine 1-phosphate from alpha-D-glucosamine 6-phosphate (route II): step 2/2. It participates in nucleotide-sugar biosynthesis; UDP-N-acetyl-alpha-D-glucosamine biosynthesis; UDP-N-acetyl-alpha-D-glucosamine from N-acetyl-alpha-D-glucosamine 1-phosphate: step 1/1. The protein operates within bacterial outer membrane biogenesis; LPS lipid A biosynthesis. Its function is as follows. Catalyzes the last two sequential reactions in the de novo biosynthetic pathway for UDP-N-acetylglucosamine (UDP-GlcNAc). The C-terminal domain catalyzes the transfer of acetyl group from acetyl coenzyme A to glucosamine-1-phosphate (GlcN-1-P) to produce N-acetylglucosamine-1-phosphate (GlcNAc-1-P), which is converted into UDP-GlcNAc by the transfer of uridine 5-monophosphate (from uridine 5-triphosphate), a reaction catalyzed by the N-terminal domain. This is Bifunctional protein GlmU from Corynebacterium glutamicum (strain R).